The primary structure comprises 1822 residues: Integrin beta-4 (1822 aa).

Positions Met1–Ala27 are cleaved as a signal peptide. The Extracellular segment spans residues Asn28 to Ser710. Residues Arg29 to Gln73 form the PSI domain. 8 disulfides stabilise this stretch: Cys30–Cys48, Cys38–Cys455, Cys41–Cys61, Cys51–Cys72, Cys245–Cys288, Cys457–Cys476, Cys468–Cys479, and Cys481–Cys490. Positions Asp131–Ser329 constitute a VWFA domain. Mg(2+) is bound by residues Ser139 and Ser141. Residues Ser141, Asp144, Asp145, and Asp176 each contribute to the Ca(2+) site. The tract at residues Trp194–Pro199 is involved in NRG1- and IGF1-binding. Ca(2+) contacts are provided by Asn228, Asp230, Pro232, and Glu233. A Mg(2+)-binding site is contributed by Glu233. The N-linked (GlcNAc...) asparagine glycan is linked to Asn327. Glu350 contributes to the Ca(2+) binding site. 4 consecutive I-EGF domains span residues Cys457 to Asn491, Cys492 to Glu537, Tyr538 to Asp574, and Cys575 to Glu615. The N-linked (GlcNAc...) asparagine glycan is linked to Asn491. 11 disulfides stabilise this stretch: Cys492-Cys520, Cys503-Cys518, Cys512-Cys523, Cys525-Cys536, Cys543-Cys557, Cys551-Cys562, Cys564-Cys573, Cys575-Cys598, Cys582-Cys596, Cys590-Cys601, and Cys603-Cys614. Asn579 is a glycosylation site (N-linked (GlcNAc...) asparagine). Residue Asn617 is glycosylated (N-linked (GlcNAc...) asparagine). Cystine bridges form between Cys626–Cys671, Cys632–Cys651, Cys635–Cys648, and Cys680–Cys706. N-linked (GlcNAc...) asparagine glycosylation occurs at Asn695. Residues Phe711–Trp733 traverse the membrane as a helical segment. The tract at residues Cys732–Cys749 is palmitoylated on several cysteines. The Cytoplasmic segment spans residues Lys734–Thr1822. Phosphoserine occurs at positions 771, 1069, and 1119. Residues Val979–Ser1084 enclose the Calx-beta domain. The segment at Thr1113–Ser1140 is disordered. Fibronectin type-III domains are found at residues Ala1129 to Glu1218 and Glu1222 to Lys1321. Residues Leu1400 to Asn1444 are disordered. Gly residues predominate over residues Asp1418–Gly1427. Ser1454, Ser1457, and Ser1474 each carry phosphoserine. Position 1487 is a phosphothreonine (Thr1487). Ser1494 is modified (phosphoserine). The segment at Leu1495–Ala1525 is disordered. A compositionally biased stretch (polar residues) spans Ser1503–Ser1518. Thr1530 is modified (phosphothreonine). 2 consecutive Fibronectin type-III domains span residues Thr1530 to Gln1625 and Ala1643 to Gly1739. The residue at position 1791 (Ser1791) is a Phosphoserine.

It belongs to the integrin beta chain family. In terms of assembly, heterodimer of an alpha and a beta subunit. Beta-4 associates with alpha-6. Interacts (via cytoplasmic region) with COL17A1 (via cytoplasmic region). Interacts (via cytoplasmic region) with DST isoform 3 (via N-terminus). Isoform beta-4a interacts (via cytoplasmic domain) with DST (via N-terminus). Interacts with RAC1. ITGA6:ITGB4 is found in a ternary complex with NRG1 and ERBB3. ITGA6:ITGB4 is found in a ternary complex with IGF1 and IGF1R. ITGA6:ITGB4 interacts with IGF2. Interacts with TMEM268; this interaction prevents ITGB4 degradation. Palmitoylated by DHHC3 at several cysteines of the membrane-proximal region, enhancing stability and cell surface expression. Palmitoylation also promotes secondary association with tertaspanins. In terms of tissue distribution, integrin alpha-6/beta-4 is predominantly expressed by epithelia. Isoform beta-4D is also expressed in colon and placenta. Isoform beta-4E is also expressed in epidermis, lung, duodenum, heart, spleen and stomach.

It is found in the cell membrane. The protein resides in the cell junction. The protein localises to the hemidesmosome. Integrin alpha-6/beta-4 is a receptor for laminin. Plays a critical structural role in the hemidesmosome of epithelial cells. Is required for the regulation of keratinocyte polarity and motility. ITGA6:ITGB4 binds to NRG1 (via EGF domain) and this binding is essential for NRG1-ERBB signaling. ITGA6:ITGB4 binds to IGF1 and this binding is essential for IGF1 signaling. ITGA6:ITGB4 binds to IGF2 and this binding is essential for IGF2 signaling. This Homo sapiens (Human) protein is Integrin beta-4 (ITGB4).